The primary structure comprises 282 residues: MLLMIINGEGHILGRLASVVSKKLLEGEEVIVLNAEKILITGSKEWAYGKYKQRIDRASISNPRRMGPKYPRRPDDIFRRTVRGMLPYKKSKGREAFKGLKAYVGIPREFKDEEMVEIPDAKAGSIKKGMELGEISELLGARLQIGSVIMKKVIHTSGKRKTAIARGTIREGKGRVRINKVPVELYTPELARLKIMEPLKLAGDVINDVDINVRVVGGGIVGQAEAARMVIARGLVDWTSDMDLKEKFVQYDRTMLVGDPRRSEPKKYGGRGARARRQKSYR.

The large ribosomal subunit protein uL13 stretch occupies residues 1 to 141; it reads MLLMIINGEG…LGEISELLGA (141 aa). Positions 150 to 282 are small ribosomal subunit protein uS9; that stretch reads MKKVIHTSGK…ARARRQKSYR (133 aa). Residues 259-282 form a disordered region; it reads DPRRSEPKKYGGRGARARRQKSYR. Over residues 273–282 the composition is skewed to basic residues; sequence ARARRQKSYR.

This sequence in the N-terminal section; belongs to the universal ribosomal protein uL13 family. In the C-terminal section; belongs to the universal ribosomal protein uS9 family. In terms of assembly, L13 is part of the 50S ribosomal subunit. S9 is part of the 30S ribosomal subunit.

Functionally, L13 protein is one of the early assembly proteins of the 50S ribosomal subunit, although it is not seen to bind rRNA by itself. It is important during the early stages of 50S assembly. This chain is Fused uL13/uS9 ribosomal subunit protein (rpl13/rps9), found in Methanothermobacter thermautotrophicus (strain ATCC 29096 / DSM 1053 / JCM 10044 / NBRC 100330 / Delta H) (Methanobacterium thermoautotrophicum).